A 353-amino-acid polypeptide reads, in one-letter code: UDP-3-O-acylglucosamine N-acyltransferase (353 aa).

The Proton acceptor role is filled by His-242.

Belongs to the transferase hexapeptide repeat family. LpxD subfamily. Homotrimer.

The enzyme catalyses a UDP-3-O-[(3R)-3-hydroxyacyl]-alpha-D-glucosamine + a (3R)-hydroxyacyl-[ACP] = a UDP-2-N,3-O-bis[(3R)-3-hydroxyacyl]-alpha-D-glucosamine + holo-[ACP] + H(+). The protein operates within bacterial outer membrane biogenesis; LPS lipid A biosynthesis. In terms of biological role, catalyzes the N-acylation of UDP-3-O-acylglucosamine using 3-hydroxyacyl-ACP as the acyl donor. Is involved in the biosynthesis of lipid A, a phosphorylated glycolipid that anchors the lipopolysaccharide to the outer membrane of the cell. This Pseudomonas paraeruginosa (strain DSM 24068 / PA7) (Pseudomonas aeruginosa (strain PA7)) protein is UDP-3-O-acylglucosamine N-acyltransferase.